The primary structure comprises 494 residues: Probable cytosol aminopeptidase (494 aa).

Lysine 260 and aspartate 265 together coordinate Mn(2+). Residue lysine 272 is part of the active site. Residues aspartate 283, aspartate 342, and glutamate 344 each contribute to the Mn(2+) site. Residue arginine 346 is part of the active site.

Belongs to the peptidase M17 family. Mn(2+) serves as cofactor.

The protein localises to the cytoplasm. It catalyses the reaction Release of an N-terminal amino acid, Xaa-|-Yaa-, in which Xaa is preferably Leu, but may be other amino acids including Pro although not Arg or Lys, and Yaa may be Pro. Amino acid amides and methyl esters are also readily hydrolyzed, but rates on arylamides are exceedingly low.. The enzyme catalyses Release of an N-terminal amino acid, preferentially leucine, but not glutamic or aspartic acids.. Its function is as follows. Presumably involved in the processing and regular turnover of intracellular proteins. Catalyzes the removal of unsubstituted N-terminal amino acids from various peptides. The polypeptide is Probable cytosol aminopeptidase (Bacillus cereus (strain ZK / E33L)).